A 255-amino-acid polypeptide reads, in one-letter code: Large ribosomal subunit protein uL2 (255 aa).

The interval 211–235 is disordered; sequence PHGGGNHQHVGHATTTKRDDPAGKK.

This sequence belongs to the universal ribosomal protein uL2 family.

This is Large ribosomal subunit protein uL2 (rpl8) from Dictyostelium discoideum (Social amoeba).